The sequence spans 1113 residues: Carbamoyl phosphate synthase large chain (1113 aa).

A carboxyphosphate synthetic domain region spans residues 1 to 407 (MPKRSDINHV…ALNKALRSLE (407 aa)). ATP is bound by residues R134, R174, G180, G181, E213, I215, E220, G246, V247, H248, Q290, and E304. An ATP-grasp 1 domain is found at 138-333 (KDIVTTIGGE…IAKMAAKLAI (196 aa)). Positions 290, 304, and 306 each coordinate Mg(2+). The Mn(2+) site is built by Q290, E304, and N306. The oligomerization domain stretch occupies residues 408-565 (TKQQGFWTKP…ELDPAAESEV (158 aa)). Residues 566–967 (APQTEREKVL…AYAKAEAGAF (402 aa)) are carbamoyl phosphate synthetic domain. The ATP-grasp 2 domain occupies 695 to 886 (GALLNREQLP…LAKAASRIAV (192 aa)). ATP contacts are provided by R731, R770, L772, E777, G802, I803, H804, S805, Q845, and E857. Mg(2+) is bound by residues Q845, E857, and N859. The Mn(2+) site is built by Q845, E857, and N859. In terms of domain architecture, MGS-like spans 968–1113 (GALPTEGTVF…LQELDHAVKA (146 aa)). The allosteric domain stretch occupies residues 968-1113 (GALPTEGTVF…LQELDHAVKA (146 aa)).

Belongs to the CarB family. Composed of two chains; the small (or glutamine) chain promotes the hydrolysis of glutamine to ammonia, which is used by the large (or ammonia) chain to synthesize carbamoyl phosphate. Tetramer of heterodimers (alpha,beta)4. Mg(2+) is required as a cofactor. Mn(2+) serves as cofactor.

It carries out the reaction hydrogencarbonate + L-glutamine + 2 ATP + H2O = carbamoyl phosphate + L-glutamate + 2 ADP + phosphate + 2 H(+). It catalyses the reaction hydrogencarbonate + NH4(+) + 2 ATP = carbamoyl phosphate + 2 ADP + phosphate + 2 H(+). Its pathway is amino-acid biosynthesis; L-arginine biosynthesis; carbamoyl phosphate from bicarbonate: step 1/1. It participates in pyrimidine metabolism; UMP biosynthesis via de novo pathway; (S)-dihydroorotate from bicarbonate: step 1/3. In terms of biological role, large subunit of the glutamine-dependent carbamoyl phosphate synthetase (CPSase). CPSase catalyzes the formation of carbamoyl phosphate from the ammonia moiety of glutamine, carbonate, and phosphate donated by ATP, constituting the first step of 2 biosynthetic pathways, one leading to arginine and/or urea and the other to pyrimidine nucleotides. The large subunit (synthetase) binds the substrates ammonia (free or transferred from glutamine from the small subunit), hydrogencarbonate and ATP and carries out an ATP-coupled ligase reaction, activating hydrogencarbonate by forming carboxy phosphate which reacts with ammonia to form carbamoyl phosphate. In Corynebacterium glutamicum (strain ATCC 13032 / DSM 20300 / JCM 1318 / BCRC 11384 / CCUG 27702 / LMG 3730 / NBRC 12168 / NCIMB 10025 / NRRL B-2784 / 534), this protein is Carbamoyl phosphate synthase large chain.